The primary structure comprises 170 residues: MTGGVMSQKFVVGAGLLVCSVCSLSAMAGSKPVDLILRVLVDAPPPCSIKGSQVEFGNMIADNVDGTNYRQDAKYTLNCTNSLANDLRMQLKGNTSTINGETVLSTNITGLGIRIENSADNSLFAVGENSWTPFNINNQPQLKAVPVKASGAQLAAGEFNASLTMVVDYQ.

The N-terminal stretch at 1 to 28 (MTGGVMSQKFVVGAGLLVCSVCSLSAMA) is a signal peptide.

It belongs to the fimbrial protein family.

Functionally, part of the yfcOPQRSUV fimbrial operon. Could contribute to adhesion to various surfaces in specific environmental niches. Increases adhesion to eukaryotic T24 bladder epithelial cells in the absence of fim genes. This is an uncharacterized protein from Escherichia coli (strain K12).